We begin with the raw amino-acid sequence, 142 residues long: Large ribosomal subunit protein uL13 (142 aa).

This sequence belongs to the universal ribosomal protein uL13 family. In terms of assembly, part of the 50S ribosomal subunit.

Its function is as follows. This protein is one of the early assembly proteins of the 50S ribosomal subunit, although it is not seen to bind rRNA by itself. It is important during the early stages of 50S assembly. This Paraburkholderia phytofirmans (strain DSM 17436 / LMG 22146 / PsJN) (Burkholderia phytofirmans) protein is Large ribosomal subunit protein uL13.